The sequence spans 133 residues: DQDCLSGWSFYEGHCYQLFRLKTWDEAEKYCNQWDGGHLVSIESNAKAEFVAQLISRKLPKSAIEDRVWIGLRDRSKREQCGHLWTDNSFVHYEHVVPPTKCFVLERQTEFRKWIAVNCEFKFPFVCKAKIPR.

Intrachain disulfides connect C4–C15, C31–C127, and C102–C119. In terms of domain architecture, C-type lectin spans 11–128 (YEGHCYQLFR…CEFKFPFVCK (118 aa)).

The protein belongs to the snaclec family. Heterodimer of subunits alpha and beta; disulfide-linked. Forms an active complex with the pentameric immunoglobuline Mkappa (IgMkappa). Expressed by the venom gland.

It is found in the secreted. In terms of biological role, echicetin itself inhibits aggregation of washed platelets induced by vWF, thrombin or alboaggregin-A. However, when complexed with the pentameric plasma immunoglobulin Mkappa (IgMkappa), echicetin binds specifically to GPIb and activates platelets. This is caused by P-selectin expression and activation of alpha-IIb/beta-3 as well as tyrosine phosphorylation of several signal transduction molecules, including p53/56(LYN), p64, p72(SYK), p70 to p90, and p120. In vivo, it induces thrombocytopenia when injected into mice, probably accounting of activation of platelets rather than inhibition. This chain is Snaclec echicetin subunit alpha, found in Echis carinatus sochureki (Saw-scaled viper).